The following is a 328-amino-acid chain: MNDNAFTFQTLHPETIMDALFEQGIRVDSGLTPLNSYENRVYQFQDEDRRRFVVKFYRPERWSVDQIREEHQFALELVKDEVPVAAPLAFNGQTLLAHQGYHYAIFPSVGGRQFEADNIDQMEAVGRYLGRLHQTGRKRPFTFRPDIGLAEYLFEPRQVFEDAALIPSGQKAAFLKATDTLLSAVTECWRTDFATLRLHGDCHAGNILWRDGPLFVDLDDARNGPAIQDLWMLLNGDKAEQRMQLETIIEAYEEISEFDTAEIGLIEPLRAMRLVYYLAWLIRRWGDPAFPKNFPWLTGEDYWQRQTTTFIEQTKILHEPPLQLTPMY.

Asp-201 acts as the Proton acceptor in catalysis. The Mg(2+) site is built by Asn-206 and Asp-217. The active site involves Asp-217.

It belongs to the SrkA/RdoA protein kinase family. In terms of assembly, monomer. Mg(2+) serves as cofactor.

The protein resides in the cytoplasm. The catalysed reaction is L-seryl-[protein] + ATP = O-phospho-L-seryl-[protein] + ADP + H(+). The enzyme catalyses L-threonyl-[protein] + ATP = O-phospho-L-threonyl-[protein] + ADP + H(+). In terms of biological role, a protein kinase that phosphorylates Ser and Thr residues. Probably acts to suppress the effects of stress linked to accumulation of reactive oxygen species. Probably involved in the extracytoplasmic stress response. The sequence is that of Stress response kinase A from Salmonella choleraesuis (strain SC-B67).